The following is a 280-amino-acid chain: Extracellular metalloprotease GLRG_06286 (280 aa).

The signal sequence occupies residues 1 to 17; the sequence is MQVTFTLVAALAGMASA. N51 carries N-linked (GlcNAc...) asparagine glycosylation. Residue H196 coordinates Zn(2+). E197 is an active-site residue. Residue H200 coordinates Zn(2+). The tract at residues 217–236 is disordered; the sequence is DSIADTPAQSSPSSGCPVGR. Residues C232 and C259 are joined by a disulfide bond.

Belongs to the peptidase M43B family.

It is found in the secreted. Its function is as follows. Secreted metalloproteinase that allows assimilation of proteinaceous substrates. The polypeptide is Extracellular metalloprotease GLRG_06286 (Colletotrichum graminicola (strain M1.001 / M2 / FGSC 10212) (Maize anthracnose fungus)).